The sequence spans 48 residues: 2-deoxy-glucose resistant protein 1, mitochondrial (48 aa).

A mitochondrion-targeting transit peptide spans 1–28 (MQVGFVSQTNCRSFPACIVFLFQMSQRQ).

It localises to the mitochondrion. The polypeptide is 2-deoxy-glucose resistant protein 1, mitochondrial (DGR1) (Saccharomyces cerevisiae (strain ATCC 204508 / S288c) (Baker's yeast)).